The chain runs to 377 residues: Actin-related protein T2 (377 aa).

It belongs to the actin family.

The protein localises to the cytoplasm. Its subcellular location is the cytoskeleton. In Macaca fascicularis (Crab-eating macaque), this protein is Actin-related protein T2 (ACTRT2).